Consider the following 797-residue polypeptide: Speckle targeted PIP5K1A-regulated poly(A) polymerase (797 aa).

The Matrin-type zinc-finger motif lies at 14–44 (FHCNLCHVNIPNRPSLEDHVKGKKHLHLLRL). The RRM domain maps to 54 to 126 (NSVFVSGFKA…LKLRVKPREK (73 aa)). Ser-205 contributes to the ATP binding site. Positions 216 and 218 each coordinate Mg(2+). UTP contacts are provided by Asp-216, Asp-218, Asn-319, Arg-341, Tyr-363, and His-495. Asn-319 contacts ATP. The PAP-associated domain maps to 421–495 (DLCTLLFGFF…NVLDPFELNH (75 aa)). A KA1; binds the bulging loops of U6 snRNA but is dispensable for terminal uridylyltransferase activity region spans residues 544–787 (QSEAAASSQP…FLPKMAETIM (244 aa)). The interval 611 to 659 (EETQSLDKTDKSGSEMEVNNNRSLEDTNIQVKGEAGKKRPLSVEEGPST) is disordered. Residues 615 to 624 (SLDKTDKSGS) are compositionally biased toward basic and acidic residues. Over residues 627 to 640 (EVNNNRSLEDTNIQ) the composition is skewed to polar residues.

The protein belongs to the DNA polymerase type-B-like family. As to quaternary structure, associates with the cleavage and polyadenylation specificity factor (CPSF) complex. Mg(2+) serves as cofactor. The cofactor is Mn(2+).

The protein resides in the nucleus. The protein localises to the nucleolus. It is found in the nucleus speckle. It catalyses the reaction RNA(n) + UTP = RNA(n)-3'-uridine ribonucleotide + diphosphate. The enzyme catalyses RNA(n) + ATP = RNA(n)-3'-adenine ribonucleotide + diphosphate. Poly(A) polymerase that creates the 3'-poly(A) tail of specific pre-mRNAs. In addition to polyadenylation, it is also required for the 3'-end cleavage of pre-mRNAs: binds to the 3'UTR of targeted pre-mRNAs and promotes the recruitment and assembly of the CPSF complex on the 3'UTR of pre-mRNAs. In addition to adenylyltransferase activity, also has uridylyltransferase activity. However, the ATP ratio is higher than UTP in cells, suggesting that it functions primarily as a poly(A) polymerase. The sequence is that of Speckle targeted PIP5K1A-regulated poly(A) polymerase (tut1) from Danio rerio (Zebrafish).